The sequence spans 134 residues: Methylglyoxal synthase (134 aa).

The region spanning Met1–Glu134 is the MGS-like domain. Substrate-binding positions include His8, Lys12, Thr34 to Thr37, and Ser54 to Gly55. Asp60 acts as the Proton donor/acceptor in catalysis. His87 contacts substrate.

This sequence belongs to the methylglyoxal synthase family.

It carries out the reaction dihydroxyacetone phosphate = methylglyoxal + phosphate. In terms of biological role, catalyzes the formation of methylglyoxal from dihydroxyacetone phosphate. This chain is Methylglyoxal synthase, found in Listeria welshimeri serovar 6b (strain ATCC 35897 / DSM 20650 / CCUG 15529 / CIP 8149 / NCTC 11857 / SLCC 5334 / V8).